The chain runs to 178 residues: Disulfide bond formation protein B (178 aa).

Residues 1-14 lie on the Cytoplasmic side of the membrane; the sequence is MLSFFKTLSTKRSA. Residues 15–31 form a helical membrane-spanning segment; sequence WFLLFSSALLLEAIALY. Over 32–49 the chain is Periplasmic; the sequence is FQHGMGLAPCVMCIYERV. Cys-41 and Cys-44 are joined by a disulfide. The chain crosses the membrane as a helical span at residues 50–65; it reads AILGIAFSGLLGLLYP. The Cytoplasmic portion of the chain corresponds to 66-72; the sequence is SSMLLRL. Residues 73 to 90 traverse the membrane as a helical segment; it reads VALLIGLSSAIKGLMISI. The Periplasmic segment spans residues 91 to 145; it reads THLDLQLYPAPWKQCSAVAEFPETLPLDQWFPALFLPSGSCSEVTWQFLGFSMVQ. A disulfide bridge links Cys-105 with Cys-131. Residues 146–164 form a helical membrane-spanning segment; it reads WIVVIFALYTLLLALIFIS. The Cytoplasmic segment spans residues 165–177; sequence QVKRLKPKQRRLF.

Belongs to the DsbB family.

The protein resides in the cell inner membrane. In terms of biological role, required for disulfide bond formation in some periplasmic proteins. Acts by oxidizing the DsbA protein. The protein is Disulfide bond formation protein B of Pasteurella multocida (strain Pm70).